Consider the following 419-residue polypeptide: Argininosuccinate synthase (419 aa).

ATP is bound by residues 9-17 (AYSGGLDTS) and Ala-35. L-citrulline is bound by residues Tyr-86 and Ser-91. 114 to 122 (AHGATGKGN) contributes to the ATP binding site. Residues Thr-118, Asn-122, and Asp-123 each coordinate L-aspartate. Asn-122 contacts L-citrulline. L-citrulline contacts are provided by Arg-126, Ser-179, Ser-188, Glu-270, and Tyr-282.

This sequence belongs to the argininosuccinate synthase family. Type 1 subfamily. In terms of assembly, homotetramer.

The enzyme catalyses L-citrulline + L-aspartate + ATP = 2-(N(omega)-L-arginino)succinate + AMP + diphosphate + H(+). The protein operates within amino-acid biosynthesis; L-arginine biosynthesis; L-arginine from L-ornithine and carbamoyl phosphate: step 2/3. It functions in the pathway nitrogen metabolism; urea cycle; (N(omega)-L-arginino)succinate from L-aspartate and L-citrulline: step 1/1. The sequence is that of Argininosuccinate synthase from Drosophila melanogaster (Fruit fly).